We begin with the raw amino-acid sequence, 89 residues long: Small ribosomal subunit protein bS18 (89 aa).

This sequence belongs to the bacterial ribosomal protein bS18 family. As to quaternary structure, part of the 30S ribosomal subunit. Forms a tight heterodimer with protein bS6.

In terms of biological role, binds as a heterodimer with protein bS6 to the central domain of the 16S rRNA, where it helps stabilize the platform of the 30S subunit. This Parabacteroides distasonis (strain ATCC 8503 / DSM 20701 / CIP 104284 / JCM 5825 / NCTC 11152) protein is Small ribosomal subunit protein bS18.